The chain runs to 208 residues: LexA repressor (208 aa).

Residues 28-48 constitute a DNA-binding region (H-T-H motif); it reads RAEIARELGFRSANAAEEHLK. Active-site for autocatalytic cleavage activity residues include Ser125 and Lys162.

It belongs to the peptidase S24 family. As to quaternary structure, homodimer.

It catalyses the reaction Hydrolysis of Ala-|-Gly bond in repressor LexA.. Functionally, represses a number of genes involved in the response to DNA damage (SOS response), including recA and lexA. In the presence of single-stranded DNA, RecA interacts with LexA causing an autocatalytic cleavage which disrupts the DNA-binding part of LexA, leading to derepression of the SOS regulon and eventually DNA repair. The protein is LexA repressor of Aliivibrio fischeri (strain ATCC 700601 / ES114) (Vibrio fischeri).